Reading from the N-terminus, the 83-residue chain is Small ribosomal subunit protein bS20 (83 aa).

It belongs to the bacterial ribosomal protein bS20 family.

Binds directly to 16S ribosomal RNA. The chain is Small ribosomal subunit protein bS20 from Amoebophilus asiaticus (strain 5a2).